Reading from the N-terminus, the 470-residue chain is Ribulose bisphosphate carboxylase large chain (470 aa).

The substrate site is built by Asn115 and Thr165. The active-site Proton acceptor is the Lys167. Lys169 lines the substrate pocket. Positions 193, 195, and 196 each coordinate Mg(2+). Lys193 carries the N6-carboxylysine modification. His286 functions as the Proton acceptor in the catalytic mechanism. Substrate-binding residues include Arg287, His319, and Ser371.

The protein belongs to the RuBisCO large chain family. Type I subfamily. Heterohexadecamer of 8 large chains and 8 small chains. The cofactor is Mg(2+).

The protein localises to the carboxysome. The catalysed reaction is 2 (2R)-3-phosphoglycerate + 2 H(+) = D-ribulose 1,5-bisphosphate + CO2 + H2O. It carries out the reaction D-ribulose 1,5-bisphosphate + O2 = 2-phosphoglycolate + (2R)-3-phosphoglycerate + 2 H(+). In terms of biological role, ruBisCO catalyzes two reactions: the carboxylation of D-ribulose 1,5-bisphosphate, the primary event in carbon dioxide fixation, as well as the oxidative fragmentation of the pentose substrate in the photorespiration process. Both reactions occur simultaneously and in competition at the same active site. This chain is Ribulose bisphosphate carboxylase large chain, found in Synechococcus sp. (strain CC9311).